Here is a 590-residue protein sequence, read N- to C-terminus: Negative elongation factor D (590 aa).

The segment at 15–43 (YGSAAEWGDEADGGQQEDDSGEGEDDAEV) is disordered. Acidic residues predominate over residues 21–43 (WGDEADGGQQEDDSGEGEDDAEV).

This sequence belongs to the NELF-D family. In terms of assembly, the NELF complex is composed of NELFA, NELFB, NELFCD and NELFE; NELFA and NELFCD form a stable subcomplex that binds primarily through NELFCD to the N-terminus of NELFB. Binds RNA which may help to stabilize the NELF complex on nucleic acid. In vitro, the NELFA:NELFCD subcomplex binds to ssDNA and ssRNA in a sequence- and structure-dependent manner. Interacts with ARAF1. Interacts with PCF11. Interacts with NELFB. Interacts with KAT8.

Its subcellular location is the nucleus. Its function is as follows. Essential component of the NELF complex, a complex that negatively regulates the elongation of transcription by RNA polymerase II. The NELF complex, which acts via an association with the DSIF complex and causes transcriptional pausing, is counteracted by the P-TEFb kinase complex. This chain is Negative elongation factor D (NELFCD), found in Pongo abelii (Sumatran orangutan).